Consider the following 437-residue polypeptide: Protein PhoH2 (437 aa).

Residues 7–134 (RTYVLDTSVL…LVSKDIPLRV (128 aa)) form the PINc domain.

This sequence in the N-terminal section; belongs to the PINc/VapC protein family. In the C-terminal section; belongs to the PhoH family. In terms of assembly, interacts with antitoxin PhoAT. Requires Mg(2+) as cofactor.

The catalysed reaction is n ATP + n H2O + wound RNA = n ADP + n phosphate + unwound RNA.. It catalyses the reaction ATP + H2O = ADP + phosphate + H(+). It carries out the reaction GTP + H2O = GDP + phosphate + H(+). Its function is as follows. Toxic component of a type II toxin-antitoxin (TA) system. The possible cognate antitoxin is PhoAT; the toxin gene can be expressed in the absence of the antitoxin gene in an endogenous mc(2)155 double deletion. Unwinds and/or cleaves 5'-tailed RNA in vitro that starts with 5'-AC, the reaction requires hydrolyzable ATP; double-stranded (ds)RNA and dsDNA are not unwound or cleaved. Has ATPase and GTPase activities. In Mycolicibacterium smegmatis (strain ATCC 700084 / mc(2)155) (Mycobacterium smegmatis), this protein is Protein PhoH2.